The chain runs to 1404 residues: ABC transporter G family member 47 (1404 aa).

The region spanning 156–423 (GNALHITRKK…FQSIGFKCPE (268 aa)) is the ABC transporter 1 domain. Residue 189–196 (GPPGSGKT) participates in ATP binding. Residues 501–714 (ELLQANIDRE…ALNTLAVNEF (214 aa)) form the ABC transmembrane type-2 1 domain. The next 7 membrane-spanning stretches (helical) occupy residues 519 to 539 (FLYI…MTVF), 565 to 585 (MIMF…PVFF), 607 to 627 (TPIS…VIGF), 638 to 658 (FLAL…IASL), 663 to 683 (VVAS…SGFI), 692 to 712 (WWIW…LAVN), and 751 to 771 (VGAL…CLIF). One can recognise an ABC transporter 2 domain in the interval 808–1059 (ITFEDIKYSI…ELIRYFEAIE (252 aa)). 852 to 859 (GVSGAGKT) contributes to the ATP binding site. One can recognise an ABC transmembrane type-2 2 domain in the interval 1132–1346 (TQCLACLWKQ…TLNGLVTSQF (215 aa)). The next 7 membrane-spanning stretches (helical) occupy residues 1152–1172 (IAVK…MFWG), 1183–1199 (LFSA…TMGV), 1239–1259 (LPYI…MIGY), 1266–1286 (FFWY…YGMM), 1298–1318 (TVVS…LIPL), 1321–1341 (IPIW…LNGL), and 1373–1393 (LLWV…FLFG).

This sequence belongs to the ABC transporter superfamily. ABCG family. PDR (TC 3.A.1.205) subfamily.

The protein localises to the membrane. Its function is as follows. May be a general defense protein. This is ABC transporter G family member 47 from Oryza sativa subsp. japonica (Rice).